A 217-amino-acid chain; its full sequence is Large ribosomal subunit protein uL4 (217 aa).

A disordered region spans residues 46–103 (KRQGTHATKTRGMVSGGGRKPFRQKGTGRARQGSIRAPHFTGGGTVHGPQPRDYSQRT).

It belongs to the universal ribosomal protein uL4 family. As to quaternary structure, part of the 50S ribosomal subunit.

In terms of biological role, one of the primary rRNA binding proteins, this protein initially binds near the 5'-end of the 23S rRNA. It is important during the early stages of 50S assembly. It makes multiple contacts with different domains of the 23S rRNA in the assembled 50S subunit and ribosome. Forms part of the polypeptide exit tunnel. In Corynebacterium jeikeium (strain K411), this protein is Large ribosomal subunit protein uL4.